The following is a 72-amino-acid chain: MTPYLKIIKSSYTLLSFFYFIANTIIRTIQNVPTSHKIILVSLYYLVFSLFITRIFYGSPLKIISTYIYGKF.

A run of 2 helical transmembrane segments spans residues 6-26 and 38-58; these read KIIKSSYTLLSFFYFIANTII and IILVSLYYLVFSLFITRIFYG.

The protein resides in the membrane. This is Putative transmembrane protein DDB_G0272126 from Dictyostelium discoideum (Social amoeba).